A 721-amino-acid chain; its full sequence is Protein quick-to-court (721 aa).

Disordered stretches follow at residues 1–42 (MMTS…RIPH), 143–210 (VGNS…ASVA), 360–379 (SSPE…EAEL), 393–428 (DEGN…MQSS), and 441–471 (SSVH…CGAG). Residues 17–31 (QVQREKDNDSAEDSH) are compositionally biased toward basic and acidic residues. Low complexity predominate over residues 161 to 201 (NGGSDISSSGTSSSSSNNKESSPRTTRTPRTPQTPQTPQTP). The span at 362–379 (PEERSASSDAVTVREAEL) shows a compositional bias: basic and acidic residues. The span at 406–420 (RQQQQQANHSLQAMQ) shows a compositional bias: low complexity. Residues 441 to 454 (SSVHSKDSQTQSEA) are compositionally biased toward polar residues. Residues 511–569 (KRSHNDKVEALLQKLAECNTRYSDMVPDYEQAKQRIRELEKQLEDLQRKLIEHEEKQNK) adopt a coiled-coil conformation. The 49-residue stretch at 668–716 (HVDPEVTLQFLKSAIFYFLTDKENSQGHLQAIESILEFTDAEKQKISAA) folds into the GRIP domain.

In terms of tissue distribution, expressed in the third antennal segment and the maxillary palp, with increased expression near the cuticle of both olfactory organs. Also detected in the second antenna segment. In the brain, expressed in the central nervous system, with high levels of expression in the visual system including the retina and optic lobe, and uniform expression in the cortex. Detected in the thorax and abdomen, with increased expression in the ventral ganglion. In males, detected in the reproductive tract including the ejaculatory bulb and testis.

Functionally, in adult males, modulates sexual behavior by playing a role in sex discrimination and maintaining normal levels of sexual activity towards both males and females. This Drosophila melanogaster (Fruit fly) protein is Protein quick-to-court.